Reading from the N-terminus, the 373-residue chain is Sodium-dependent organic anion transporter (373 aa).

Residues 1-15 are compositionally biased toward polar residues; the sequence is MSTDCAGNSTCPVNS. A disordered region spans residues 1-21; that stretch reads MSTDCAGNSTCPVNSTEEDPP. Over 1-32 the chain is Extracellular; that stretch reads MSTDCAGNSTCPVNSTEEDPPVGMEGHANLKL. Asn-8 and Asn-14 each carry an N-linked (GlcNAc...) asparagine glycan. The helical transmembrane segment at 33 to 53 threads the bilayer; the sequence is LFTVLSAVMVGLVMFSFGCSV. Residues 54 to 67 lie on the Cytoplasmic side of the membrane; sequence ESQKLWLHLRRPWG. A helical membrane pass occupies residues 68–88; the sequence is IAVGLLSQFGLMPLTAYLLAI. The Extracellular segment spans residues 89–97; it reads GFGLKPFQA. A helical transmembrane segment spans residues 98-118; that stretch reads IAVLMMGSCPGGTISNVLTFW. The Cytoplasmic segment spans residues 119-126; it reads VDGDMDLS. A helical membrane pass occupies residues 127–147; sequence ISMTTCSTVAALGMMPLCLYI. At 148 to 157 the chain is on the extracellular side; that stretch reads YTRSWTLTQN. A helical membrane pass occupies residues 158–178; that stretch reads LVIPYQSIGITLVSLVVPVAS. Over 179–195 the chain is Cytoplasmic; the sequence is GVYVNYRWPKQATVILK. Residues 196–216 traverse the membrane as a helical segment; sequence VGAILGGMLLLVVAVTGMVLA. Residues 217–224 lie on the Extracellular side of the membrane; the sequence is KGWNTDVT. The helical transmembrane segment at 225-245 threads the bilayer; it reads LLVISCIFPLVGHVTGFLLAF. Over 246-265 the chain is Cytoplasmic; it reads LTHQSWQRCRTISIETGAQN. A helical membrane pass occupies residues 266 to 283; that stretch reads IQLCIAMLQLSFSAEYLV. Residue Gln-284 is a topological domain, extracellular. The helical transmembrane segment at 285–305 threads the bilayer; that stretch reads LLNFALAYGLFQVLHGLLIVA. At 306–373 the chain is on the cytoplasmic side; sequence AYQAYKRRQK…ELTSHIPSCE (68 aa).

It belongs to the bile acid:sodium symporter (BASS) (TC 2.A.28) family. Glycosylated. In terms of tissue distribution, highest expression in lung and testis, moderate expression in heart, bladder and skin, and low expression in blood, liver, stomach, small intestine, spleen, kidney, adrenal gland, seminal vesicle, preputial gland, coagulating gland, lacrimal gland/eye, and brain.

It is found in the membrane. It catalyses the reaction estrone 3-sulfate(out) + 2 Na(+)(out) = estrone 3-sulfate(in) + 2 Na(+)(in). The enzyme catalyses 17beta-estradiol 3-sulfate(out) + 2 Na(+)(out) = 17beta-estradiol 3-sulfate(in) + 2 Na(+)(in). It carries out the reaction dehydroepiandrosterone 3-sulfate(out) + 2 Na(+)(out) = dehydroepiandrosterone 3-sulfate(in) + 2 Na(+)(in). The catalysed reaction is androst-5-ene-diol 3-sulfate(out) + 2 Na(+)(out) = androst-5-ene-diol 3-sulfate(in) + 2 Na(+)(in). It catalyses the reaction pregnenolone sulfate(out) + 2 Na(+)(out) = pregnenolone sulfate(in) + 2 Na(+)(in). The enzyme catalyses taurolithocholate 3-sulfate(out) + 2 Na(+)(out) = taurolithocholate 3-sulfate(in) + 2 Na(+)(in). It carries out the reaction androsterone 3alpha-sulfate(out) + 2 Na(+)(out) = androsterone 3alpha-sulfate(in) + 2 Na(+)(in). The catalysed reaction is 5alpha-dihydrotestosterone sulfate(out) + 2 Na(+)(out) = 5alpha-dihydrotestosterone sulfate(in) + 2 Na(+)(in). It catalyses the reaction 17beta-estradiol 17-sulfate(out) + 2 Na(+)(out) = 17beta-estradiol 17-sulfate(in) + 2 Na(+)(in). The enzyme catalyses 17alpha-hydroxypregnenolone 3-sulfate(out) + 2 Na(+)(out) = 17alpha-hydroxypregnenolone 3-sulfate(in) + 2 Na(+)(in). It carries out the reaction epiandrosterone 3-sulfate(out) + 2 Na(+)(out) = epiandrosterone 3-sulfate(in) + 2 Na(+)(in). The catalysed reaction is epitestosterone 17-sulfate(out) + 2 Na(+)(out) = epitestosterone 17-sulfate(in) + 2 Na(+)(in). It catalyses the reaction testosterone 17-sulfate(out) + 2 Na(+)(out) = testosterone 17-sulfate(in) + 2 Na(+)(in). The enzyme catalyses 16alpha-hydroxydehydroepiandrosterone 3-sulfate(out) + 2 Na(+)(out) = 16alpha-hydroxydehydroepiandrosterone 3-sulfate(in) + 2 Na(+)(in). Transports sulfoconjugated steroid hormones from the extracellular compartment into the cytosol in a sodium-dependent manner without hydrolysis. Steroid sulfate hormones are commonly considered to be biologically inactive metabolites, that may be activated by steroid sulfatases into free steroids. May play an important role by delivering sulfoconjugated steroids to specific target cells in reproductive organs. May play a role transporting the estriol precursor 16alpha-hydroxydehydroepiandrosterone 3-sulfate (16a-OH-DHEAS) at the fetal blood vessel endothelium. Can also transport other sulfoconjugated molecules such as taurolithocholic acid-3-sulfate and sulfoconjugated pyrenes. In Mus musculus (Mouse), this protein is Sodium-dependent organic anion transporter (Slc10a6).